The chain runs to 84 residues: Exodeoxyribonuclease 7 small subunit (84 aa).

It belongs to the XseB family. As to quaternary structure, heterooligomer composed of large and small subunits.

It is found in the cytoplasm. The catalysed reaction is Exonucleolytic cleavage in either 5'- to 3'- or 3'- to 5'-direction to yield nucleoside 5'-phosphates.. Bidirectionally degrades single-stranded DNA into large acid-insoluble oligonucleotides, which are then degraded further into small acid-soluble oligonucleotides. The chain is Exodeoxyribonuclease 7 small subunit from Bacillus velezensis (strain DSM 23117 / BGSC 10A6 / LMG 26770 / FZB42) (Bacillus amyloliquefaciens subsp. plantarum).